A 246-amino-acid chain; its full sequence is Neurotrophic factor BDNF precursor form (246 aa).

An N-terminal signal peptide occupies residues M1–A18. The propeptide occupies T19–R127. A glycan (N-linked (GlcNAc...) asparagine) is linked at N120. 3 cysteine pairs are disulfide-bonded: C140-C207, C185-C236, and C195-C238.

The protein belongs to the NGF-beta family.

The protein resides in the secreted. Promotes the survival of neuronal populations that are all located either in the central nervous system or directly connected to it. This Ptyas major (Chinese green snake) protein is Neurotrophic factor BDNF precursor form (BDNF).